The following is a 322-amino-acid chain: Tlg2p-like protein a (322 aa).

Residues 1 to 301 (MATRNRTLLF…QRHGGMVKCA (301 aa)) lie on the Cytoplasmic side of the membrane. Positions 116–146 (KEDQHNIESLTQEITFLLKKSEKQLQRLSAS) form a coiled coil. A t-SNARE coiled-coil homology domain is found at 226–288 (EEVSVEREKE…EDGLKQLQKA (63 aa)). A helical; Anchor for type IV membrane protein membrane pass occupies residues 302–322 (SVLVILCFIMLLLLILKEIFL).

The protein belongs to the syntaxin family. In terms of assembly, interacts with VTI12 and SYP61 to form a t-SNARE complex and with VPS45. Interacts with TNO1. Binds to YKT61 and YKT62. Core constituent of the SNARE complex required for membrane fusion at the trans-Golgi network. In terms of tissue distribution, mostly expressed in flowers, to a lower extent in leaves and roots, and, at low levels, in stems.

The protein resides in the golgi apparatus. It localises to the trans-Golgi network membrane. In terms of biological role, contributes to the regulation of secretory and vacuolar transport pathways in the post-Golgi network, and to the maintenance of the Golgi apparatus and trans-Golgi network (TGN) morphologies. Together with VTI12, required for membrane fusion. Vesicle trafficking protein that functions in the secretory pathway and mediates liposome fusion; the fusion of phospholipid vesicles containing SYP41 and VTI12 is triggered by YKT61 and YKT62. Required for extracellular resistance responses to a fungal pathogen. Also involved in the protection of chloroplasts from salicylic acid-dependent biotic stress. This Arabidopsis thaliana (Mouse-ear cress) protein is Tlg2p-like protein a.